The primary structure comprises 390 residues: Formate-dependent phosphoribosylglycinamide formyltransferase (390 aa).

N(1)-(5-phospho-beta-D-ribosyl)glycinamide is bound by residues Glu18 to Leu19 and Glu78. Residues Arg110, Lys151, Ser156–Gln161, Glu191–Leu194, and Glu199 each bind ATP. The ATP-grasp domain maps to Asp115–Leu305. The Mg(2+) site is built by Glu264 and Glu276. N(1)-(5-phospho-beta-D-ribosyl)glycinamide is bound by residues Asp283, Lys353, and Arg360–Arg361.

It belongs to the PurK/PurT family. In terms of assembly, homodimer.

The enzyme catalyses N(1)-(5-phospho-beta-D-ribosyl)glycinamide + formate + ATP = N(2)-formyl-N(1)-(5-phospho-beta-D-ribosyl)glycinamide + ADP + phosphate + H(+). Its pathway is purine metabolism; IMP biosynthesis via de novo pathway; N(2)-formyl-N(1)-(5-phospho-D-ribosyl)glycinamide from N(1)-(5-phospho-D-ribosyl)glycinamide (formate route): step 1/1. Functionally, involved in the de novo purine biosynthesis. Catalyzes the transfer of formate to 5-phospho-ribosyl-glycinamide (GAR), producing 5-phospho-ribosyl-N-formylglycinamide (FGAR). Formate is provided by PurU via hydrolysis of 10-formyl-tetrahydrofolate. The chain is Formate-dependent phosphoribosylglycinamide formyltransferase from Prochlorococcus marinus (strain MIT 9515).